The chain runs to 238 residues: tRNA1(Val) (adenine(37)-N6)-methyltransferase (238 aa).

This sequence belongs to the methyltransferase superfamily. tRNA (adenine-N(6)-)-methyltransferase family.

The protein resides in the cytoplasm. The enzyme catalyses adenosine(37) in tRNA1(Val) + S-adenosyl-L-methionine = N(6)-methyladenosine(37) in tRNA1(Val) + S-adenosyl-L-homocysteine + H(+). In terms of biological role, specifically methylates the adenine in position 37 of tRNA(1)(Val) (anticodon cmo5UAC). The sequence is that of tRNA1(Val) (adenine(37)-N6)-methyltransferase from Shewanella baltica (strain OS185).